The chain runs to 301 residues: Galectin-6 (301 aa).

2 Galectin domains span residues 19–149 (YKRP…INFF) and 173–301 (YVGA…YVHI).

The polypeptide is Galectin-6 (Lgals6) (Mus musculus (Mouse)).